A 146-amino-acid polypeptide reads, in one-letter code: Probable trivalent organoarsenical cleaving enzyme (146 aa).

In terms of domain architecture, VOC spans 2 to 118 (KYVHVGVNVV…DGNEWEFFYT (117 aa)). Positions 5 and 62 each coordinate Fe(2+). Roxarsone (III) is bound by residues cysteine 95 and cysteine 96. Glutamate 114 contacts Fe(2+).

The protein to M.tuberculosis Rv2641. The cofactor is Fe(2+).

It carries out the reaction methylarsonous acid + AH2 + O2 = arsenite + methanol + A + H(+). It catalyses the reaction roxarsone (III) + AH2 + O2 = 4-hydroxy-3-nitrocyclohexa-2,5-dien-1-one + arsenite + A + H(+). The catalysed reaction is nitarsone (III) + AH2 + O2 = 4-nitrocyclohexa-2,5-dien-1-one + arsenite + A + H(+). The enzyme catalyses 4-aminophenylarsonous acid + AH2 + O2 = 4-aminocyclohexa-2,5-dien-1-one + arsenite + A. Its function is as follows. Nonheme iron-dependent dioxygenase that can break carbon-arsenic bonds, playing a role in the detoxification of environmental organoarsenical compounds. Catalyzes the oxygen-dependent demethylation of highly toxic methylarsonous acid (MAs(III)) to arsenite, which can then be exported out of the cell. Can also cleave the C-As bond in several trivalent aromatic arsenicals, including roxarsone (III), nitarsone (III) and (4-aminophenyl)arsonous acid. Organoarsenical degradation by this enzyme is proposed to have a significant impact on the arsenic biogeocycle that maintains a balance between organic and inorganic species. This Bacillus subtilis (strain 168) protein is Probable trivalent organoarsenical cleaving enzyme (yqcK).